The sequence spans 207 residues: Dephospho-CoA kinase (207 aa).

The region spanning 5–207 (IVGLTGGIAS…AALQTHRIEN (203 aa)) is the DPCK domain. 13–18 (ASGKSA) lines the ATP pocket.

Belongs to the CoaE family.

The protein resides in the cytoplasm. The catalysed reaction is 3'-dephospho-CoA + ATP = ADP + CoA + H(+). It participates in cofactor biosynthesis; coenzyme A biosynthesis; CoA from (R)-pantothenate: step 5/5. Catalyzes the phosphorylation of the 3'-hydroxyl group of dephosphocoenzyme A to form coenzyme A. This is Dephospho-CoA kinase from Xanthomonas campestris pv. campestris (strain ATCC 33913 / DSM 3586 / NCPPB 528 / LMG 568 / P 25).